The following is a 176-amino-acid chain: uncharacterized protein (176 aa).

The segment covering 1-12 (MRLPYSSSKPIP) has biased composition (polar residues). Disordered stretches follow at residues 1-88 (MRLP…PQQQ) and 109-132 (VNNS…PSSS). A compositionally biased stretch (low complexity) spans 13–24 (TNNNNNNNNTNN). The span at 37 to 46 (SYYQTQENNK) shows a compositional bias: polar residues. Over residues 47–88 (PQQSQQHPLLQHQQQQQQQQQQQQQQQQQQQQQQQQQQPQQQ) the composition is skewed to low complexity.

This is an uncharacterized protein from Dictyostelium discoideum (Social amoeba).